A 580-amino-acid chain; its full sequence is MFS-type transporter thnB (580 aa).

The segment at 1 to 33 (MSGDYSATRKSENVDTSTTASQEDSSLAPEQPE) is disordered. The segment covering 14 to 25 (VDTSTTASQEDS) has biased composition (polar residues). The next 7 membrane-spanning stretches (helical) occupy residues 60-80 (LITLVLAINLAMFLASLDQTI), 92-112 (FHGLSQVSWYGSAYFMCLGGF), 125-145 (LKISFAIAVFVFELGSLICGV), 157-177 (AIAGIGGAGITSGSTVILAFS), 188-208 (STMGVTYCIAFILGPLIGGAF), 216-236 (WCFYINLPIGGLAMALFFLFF), and 259-279 (VGTVLAMGGIISFILALQYAG). Residue asparagine 285 is glycosylated (N-linked (GlcNAc...) asparagine). Helical transmembrane passes span 286 to 306 (SSVVIGLLVGFVLIMVTLAAW), 331 to 351 (IFQFFFVGCYFLLLFYLPIYF), 364 to 384 (VDNLPLVLSACLFIILGGAAV), 389 to 409 (MATPYMTAGSAVAAVATGLLY), 421 to 441 (IGYQVLVGAGLAFPFQNALNI), 457 to 477 (SLYFFQILGGAFSISAAQAAF), and 529 to 549 (FAVSVGLVGMAFLSSLHMVMI).

The protein belongs to the major facilitator superfamily.

It is found in the membrane. MFS-type transporter; part of the gene cluster that produces the tetronate natural products trihazones. The chain is MFS-type transporter thnB from Trichoderma harzianum (Hypocrea lixii).